Here is a 542-residue protein sequence, read N- to C-terminus: CTP synthase (542 aa).

The amidoligase domain stretch occupies residues 1–265; the sequence is MTRYVFITGG…DREVLGHFGL (265 aa). Serine 13 serves as a coordination point for CTP. Serine 13 lines the UTP pocket. ATP-binding positions include 14-19 and aspartate 71; that span reads SLGKGL. Mg(2+) is bound by residues aspartate 71 and glutamate 139. CTP-binding positions include 146-148, 186-191, and lysine 222; these read DIE and KTKPTQ. Residues 186 to 191 and lysine 222 each bind UTP; that span reads KTKPTQ. The Glutamine amidotransferase type-1 domain occupies 291-541; sequence SIAIVGKYTG…VGAAIEQSRL (251 aa). Glycine 353 provides a ligand contact to L-glutamine. Cysteine 380 acts as the Nucleophile; for glutamine hydrolysis in catalysis. L-glutamine-binding positions include 381-384, glutamate 404, and arginine 469; that span reads FGMQ. Catalysis depends on residues histidine 514 and glutamate 516.

Belongs to the CTP synthase family. In terms of assembly, homotetramer.

It catalyses the reaction UTP + L-glutamine + ATP + H2O = CTP + L-glutamate + ADP + phosphate + 2 H(+). It carries out the reaction L-glutamine + H2O = L-glutamate + NH4(+). The enzyme catalyses UTP + NH4(+) + ATP = CTP + ADP + phosphate + 2 H(+). Its pathway is pyrimidine metabolism; CTP biosynthesis via de novo pathway; CTP from UDP: step 2/2. Its activity is regulated as follows. Allosterically activated by GTP, when glutamine is the substrate; GTP has no effect on the reaction when ammonia is the substrate. The allosteric effector GTP functions by stabilizing the protein conformation that binds the tetrahedral intermediate(s) formed during glutamine hydrolysis. Inhibited by the product CTP, via allosteric rather than competitive inhibition. In terms of biological role, catalyzes the ATP-dependent amination of UTP to CTP with either L-glutamine or ammonia as the source of nitrogen. Regulates intracellular CTP levels through interactions with the four ribonucleotide triphosphates. The sequence is that of CTP synthase from Methylobacterium radiotolerans (strain ATCC 27329 / DSM 1819 / JCM 2831 / NBRC 15690 / NCIMB 10815 / 0-1).